Consider the following 584-residue polypeptide: Pescadillo homolog (584 aa).

The segment at methionine 1 to valine 54 is required for 28S ribosomal RNA processing. Positions methionine 1–glutamate 257 are sufficient for nucleolar localization. The residue at position 98 (lysine 98) is an N6-acetyllysine. The interval arginine 312–proline 414 is sufficient for interaction with MAP1B. The BRCT domain occupies lysine 321–proline 414. A disordered region spans residues aspartate 449 to glycine 510. The span at glutamate 454–glutamate 489 shows a compositional bias: acidic residues. Residues glutamate 496 to proline 505 are compositionally biased toward basic and acidic residues. Lysine 513 is covalently cross-linked (Glycyl lysine isopeptide (Lys-Gly) (interchain with G-Cter in SUMO1); alternate). Lysine 513 participates in a covalent cross-link: Glycyl lysine isopeptide (Lys-Gly) (interchain with G-Cter in SUMO2); alternate. Residues methionine 535–valine 584 are required for 28S ribosomal RNA processing. A compositionally biased stretch (basic and acidic residues) spans lysine 560–glutamate 575. The disordered stretch occupies residues lysine 560–valine 584.

The protein belongs to the pescadillo family. Component of the PeBoW complex, composed of BOP1, PES1 and WDR12. The complex is held together by BOP1, which interacts with PES1 via its N-terminal domain and with WDR12 via a high-affinity interaction between the seven-bladed beta-propeller domains of the 2 proteins. The PeBoW complex associates with the 66S pre-ribosome. The PeBoW complex also associates with DDX27, PES1 interacts directly with DDX27. Interacts with IRS1 and UBTF. May interact with MAP1B. Sumoylated. Ubiquitous. Highest levels appear to be found in tissues that contain a population of proliferating cells, such as ovary and testis. Also appears to be highly expressed in kidney and liver. In the brain expression is restricted to neural progenitor cells and postmitotic neurons. Highly expressed in malignant astrocytes.

It localises to the nucleus. Its subcellular location is the nucleolus. The protein localises to the nucleoplasm. The protein resides in the chromosome. In terms of biological role, component of the PeBoW complex, which is required for maturation of 28S and 5.8S ribosomal RNAs and formation of the 60S ribosome. This chain is Pescadillo homolog (Pes1), found in Mus musculus (Mouse).